The sequence spans 119 residues: Putative transmembrane protein ORF119 (119 aa).

Helical transmembrane passes span 9–29 (TLAIALVFLGISLIFLVPAMV), 73–93 (QYAGIYTLYLSFISFVGSIFT), and 95–115 (PIALIMLILVSLIITLFAFYY).

It is found in the host membrane. This Acidianus convivator (ATV) protein is Putative transmembrane protein ORF119.